The following is a 217-amino-acid chain: Adapter protein MecA (217 aa).

This sequence belongs to the MecA family. In terms of assembly, homodimer.

Functionally, enables the recognition and targeting of unfolded and aggregated proteins to the ClpC protease or to other proteins involved in proteolysis. Acts negatively in the development of competence by binding ComK and recruiting it to the ClpCP protease. When overexpressed, inhibits sporulation. Also involved in Spx degradation by ClpC. This is Adapter protein MecA from Alkalihalophilus pseudofirmus (strain ATCC BAA-2126 / JCM 17055 / OF4) (Bacillus pseudofirmus).